Reading from the N-terminus, the 873-residue chain is Bifunctional levopimaradiene synthase, chloroplastic (873 aa).

The N-terminal 59 residues, 1-59 (MAGVLFANLPCSLQLSPKVPFRQSTNILIPFHKRSSFGFNAQHCVRSHLRLRWNCVGIH), are a transit peptide targeting the chloroplast. Substrate is bound at residue Lys-271. Positions 405 and 407 each coordinate Mg(2+). The short motif at 405–408 (DVDD) is the DXDD motif element. Residue Lys-492 coordinates substrate. 5 residues coordinate Mg(2+): Asp-624, Asp-628, Asn-769, Thr-773, and Glu-777. Residues 624 to 628 (DDLYD) carry the DDXXD motif motif.

Belongs to the terpene synthase family. Tpsd subfamily. Mg(2+) is required as a cofactor. In terms of tissue distribution, expressed in roots.

The protein resides in the plastid. It localises to the chloroplast. The enzyme catalyses (2E,6E,10E)-geranylgeranyl diphosphate = (+)-copalyl diphosphate. It catalyses the reaction (+)-copalyl diphosphate = abieta-8(14),12-diene + diphosphate. It functions in the pathway terpene metabolism; ginkgolide biosynthesis. Catalyzes the initial cyclization step in the biosynthesis of ginkgolides, a structurally unique family of diterpenoids that are highly specific platelet-activating-factor receptor antagonists. Bifunctional enzyme that catalyzes two sequential cyclizations of geranylgeranyl diphosphate (GGPP) to levopimaradiene. The protein is Bifunctional levopimaradiene synthase, chloroplastic (LPS) of Ginkgo biloba (Ginkgo).